Reading from the N-terminus, the 642-residue chain is Stress-activated map kinase-interacting protein 1 homolog (642 aa).

Residues 189 to 314 (ARIREVIGYC…EREPLFQGLL (126 aa)) enclose the CRIM domain. The segment at 603-642 (IVSPSSDAPSRSSNGKNGGKFRKMSSLMASVMGRRKSDSK) is disordered. Low complexity predominate over residues 605-615 (SPSSDAPSRSS).

It belongs to the SIN1 family. Component of the target of rapamycin complex 2 (TORC2).

Its function is as follows. Component of the target of rapamycin complex 2 (TORC2), which transduces signals from growth factors to pathways involved in proliferation, cytoskeletal organization and anabolic output. In response to growth factors, TORC2 phosphorylates and activates AGC protein kinase family members, such as Akt1. Within the TORC2 complex, sinh-1 acts as a substrate adapter which recognizes and binds AGC protein kinase family members for phosphorylation by mTor. The chain is Stress-activated map kinase-interacting protein 1 homolog (sinh-1) from Caenorhabditis elegans.